An 852-amino-acid chain; its full sequence is Zinc finger protein 484 (852 aa).

In terms of domain architecture, KRAB spans 8–78; that stretch reads VSFKDVTVDF…DGEIPSQSRP (71 aa). Lysine 156 participates in a covalent cross-link: Glycyl lysine isopeptide (Lys-Gly) (interchain with G-Cter in SUMO2). The C2H2-type 1; degenerate zinc-finger motif lies at 223–245; that stretch reads CECNQCGKPLHHKQALIQQQKIH. The segment at 279–301 adopts a C2H2-type 2; degenerate zinc-finger fold; the sequence is HECHECEAVFTQKSQLDGSQRVY. The C2H2-type 3; degenerate zinc-finger motif lies at 328–350; it reads YKCSDYGRAFIQKSDLFRCQRIH. The C2H2-type 4; degenerate zinc finger occupies 356 to 378; it reads YEYSECEKNLPQNSNLNIHKKIH. 15 consecutive C2H2-type zinc fingers follow at residues 384 to 406, 412 to 434, 440 to 462, 468 to 490, 496 to 518, 524 to 546, 552 to 574, 580 to 602, 608 to 630, 636 to 658, 664 to 686, 692 to 714, 720 to 742, 748 to 770, and 776 to 798; these read FECTECGKAFTRKSTLSMHQKIH, YVCTECGKAFIRKSHFITHERIH, YECSDCGKSFIKKSQLHVHQRIH, FICSECGKVFTHKTNLIIHQKIH, YICTVCGKAFTDRSNLIKHQKIH, YKCSDCGKSFTWKSRLRIHQKCH, YECSECGKAFIQKSTLSMHQRIH, YVCTECGKAFFHKSHFITHERIH, YECSICGKSFTKKSQLHVHQQIH, YRCAECGKAFTDRSNLFTHQKIH, YKCSDCGKAFTRKSGLHIHQQSH, YECSECGKAFARKSTLIMHQRIH, YICNECGKSFIQKSHLNRHRRIH, YECSDCGKSFIKKSQLHEHHRIH, and YICAECGKAFTIRSNLIKHQKIH. Lysine 816 participates in a covalent cross-link: Glycyl lysine isopeptide (Lys-Gly) (interchain with G-Cter in SUMO2).

Belongs to the krueppel C2H2-type zinc-finger protein family.

The protein localises to the nucleus. In terms of biological role, may be involved in transcriptional regulation. This Homo sapiens (Human) protein is Zinc finger protein 484 (ZNF484).